Reading from the N-terminus, the 261-residue chain is 4-hydroxy-tetrahydrodipicolinate reductase (261 aa).

NAD(+) contacts are provided by residues Gly-11–Met-16, Gly-96–Thr-98, and Ala-122–Phe-125. His-152 functions as the Proton donor/acceptor in the catalytic mechanism. His-153 provides a ligand contact to (S)-2,3,4,5-tetrahydrodipicolinate. Lys-156 (proton donor) is an active-site residue. Residue Gly-162–Thr-163 coordinates (S)-2,3,4,5-tetrahydrodipicolinate.

Belongs to the DapB family.

Its subcellular location is the cytoplasm. It catalyses the reaction (S)-2,3,4,5-tetrahydrodipicolinate + NAD(+) + H2O = (2S,4S)-4-hydroxy-2,3,4,5-tetrahydrodipicolinate + NADH + H(+). The catalysed reaction is (S)-2,3,4,5-tetrahydrodipicolinate + NADP(+) + H2O = (2S,4S)-4-hydroxy-2,3,4,5-tetrahydrodipicolinate + NADPH + H(+). It participates in amino-acid biosynthesis; L-lysine biosynthesis via DAP pathway; (S)-tetrahydrodipicolinate from L-aspartate: step 4/4. Catalyzes the conversion of 4-hydroxy-tetrahydrodipicolinate (HTPA) to tetrahydrodipicolinate. This Lactobacillus helveticus (strain DPC 4571) protein is 4-hydroxy-tetrahydrodipicolinate reductase.